The following is a 397-amino-acid chain: Homeobox protein knotted-1-like 2 (397 aa).

Disordered regions lie at residues 43–68 (TFHLQSSGGGGGGGSGDQCNFQSPGT), 172–191 (FEARQRSSGTSRETSKDPEL), and 233–276 (NNNA…PRAE). The span at 49–58 (SGGGGGGGSG) shows a compositional bias: gly residues. Residues 279–299 (ELKNHLLRKYSGYLSSLKQEL) form the ELK domain. A DNA-binding region (homeobox; TALE-type) is located at residues 300-363 (SKKKKKGKLP…NQRKRHWKPS (64 aa)).

It belongs to the TALE/KNOX homeobox family. In terms of tissue distribution, expressed only in the stems.

It is found in the nucleus. Its function is as follows. Probably binds to the DNA sequence 5'-TGAC-3'. This is Homeobox protein knotted-1-like 2 from Malus domestica (Apple).